Consider the following 372-residue polypeptide: N-methyl-L-tryptophan oxidase (372 aa).

4–34 contacts FAD; it reads DLIIIGSGSVGAAAGYYATRAGLKVLMTDAH. At C307 the chain carries S-8alpha-FAD cysteine.

The protein belongs to the MSOX/MTOX family. MTOX subfamily. In terms of assembly, monomer. FAD is required as a cofactor.

The enzyme catalyses N(alpha)-methyl-L-tryptophan + O2 + H2O = L-tryptophan + formaldehyde + H2O2. Functionally, catalyzes the oxidative demethylation of N-methyl-L-tryptophan. This is N-methyl-L-tryptophan oxidase from Salmonella dublin (strain CT_02021853).